The sequence spans 333 residues: Probable tRNA pseudouridine synthase B (333 aa).

Catalysis depends on D66, which acts as the Nucleophile. Residues 233 to 308 (LKKIIVKDSA…EVVEITRVIM (76 aa)) enclose the PUA domain.

This sequence belongs to the pseudouridine synthase TruB family. Type 2 subfamily.

It catalyses the reaction uridine(55) in tRNA = pseudouridine(55) in tRNA. Its function is as follows. Could be responsible for synthesis of pseudouridine from uracil-55 in the psi GC loop of transfer RNAs. The polypeptide is Probable tRNA pseudouridine synthase B (Methanococcus maripaludis (strain C6 / ATCC BAA-1332)).